The primary structure comprises 1004 residues: Ovochymase-2 (1004 aa).

The signal sequence occupies residues 1–19 (MPTRNLLLGSILLSLAVKG). A propeptide spans 20–45 (DPGPHRGARCGVSPLGSATELNYLSR) (activation peptide). The 250-residue stretch at 46–295 (IVGGRESKKG…LLGWVSSQLN (250 aa)) folds into the Peptidase S1 1 domain. A disulfide bond links Cys71 and Cys87. Catalysis depends on His86, which acts as the Charge relay system. Residue Glu113 coordinates Ca(2+). A glycan (N-linked (GlcNAc...) asparagine) is linked at Asn128. Asp136 serves as the catalytic Charge relay system. Disulfide bonds link Cys170/Cys240, Cys201/Cys219, and Cys230/Cys259. The Charge relay system role is filled by Ser234. CUB domains are found at residues 309–419 (QDGV…YSAV) and 429–541 (CGSF…FTFV). Residue Asn351 is glycosylated (N-linked (GlcNAc...) asparagine). A disulfide bond links Cys363 and Cys382. Asn408 carries N-linked (GlcNAc...) asparagine glycosylation. Intrachain disulfides connect Cys429-Cys456 and Cys483-Cys504. A compositionally biased stretch (polar residues) spans 547–558 (VEDSRQGNMPST). The segment at 547–566 (VEDSRQGNMPSTNKKETTAQ) is disordered. A Peptidase S1 2 domain is found at 580–820 (IYNSIAKVEE…FIDWIRQIMS (241 aa)). Positions 584–1004 (IAKVEEAVPH…VVPDSDSSEP (421 aa)) are cleaved as a propeptide — activation peptide. 4 cysteine pairs are disulfide-bonded: Cys609–Cys625, Cys706–Cys776, Cys737–Cys754, and Cys766–Cys796. N-linked (GlcNAc...) asparagine glycosylation is present at Asn763. Asn940 carries N-linked (GlcNAc...) asparagine glycosylation.

The protein belongs to the peptidase S1 family. Post-translationally, the catalytically inactive 110 kDa form is processed both N- and C-terminally to give rise to the 66 kDa catalytically active form. Specifically expressed in the pars recta oviduct.

Its subcellular location is the secreted. It carries out the reaction Preferential cleavage at 371-Gly-Ser-Arg-|-Trp-374 of glycoprotein gp43 in Xenopus laevis coelemic egg envelope to yield gp41.. Functionally, converts the glycoprotein envelope surrounding the egg from an unfertilizable to a fertilizable form during its transit through the pars recta portion of the oviduct by selectively hydrolyzing the envelope glycoprotein gp43. The egg envelope is converted to a sperm-penetrable form, via an increase in sperm binding. This is Ovochymase-2 (ovch2) from Xenopus laevis (African clawed frog).